The sequence spans 396 residues: NADH-quinone oxidoreductase subunit D (396 aa).

The protein belongs to the complex I 49 kDa subunit family. As to quaternary structure, NDH-1 is composed of 14 different subunits. Subunits NuoB, C, D, E, F, and G constitute the peripheral sector of the complex.

It is found in the cell inner membrane. It carries out the reaction a quinone + NADH + 5 H(+)(in) = a quinol + NAD(+) + 4 H(+)(out). In terms of biological role, NDH-1 shuttles electrons from NADH, via FMN and iron-sulfur (Fe-S) centers, to quinones in the respiratory chain. The immediate electron acceptor for the enzyme in this species is believed to be ubiquinone. Couples the redox reaction to proton translocation (for every two electrons transferred, four hydrogen ions are translocated across the cytoplasmic membrane), and thus conserves the redox energy in a proton gradient. In Brucella canis (strain ATCC 23365 / NCTC 10854 / RM-666), this protein is NADH-quinone oxidoreductase subunit D.